A 123-amino-acid chain; its full sequence is MLVQNICSTKAYNMLILNNNAFLVDVRTQEEWKQVGIPHLDNKNKVIFLSLQLNKNFEDNFLSIINEKIDTAIFFLCRSGYRSFIAANFIANIGYKNCYNISDGFEGNNQDKGWKQNNLPWQF.

The Rhodanese domain maps to 17-117 (LNNNAFLVDV…NNQDKGWKQN (101 aa)).

This is an uncharacterized protein from Rickettsia prowazekii (strain Madrid E).